A 339-amino-acid polypeptide reads, in one-letter code: D-erythrose-4-phosphate dehydrogenase (339 aa).

NAD(+) contacts are provided by residues 12–13 and R81; that span reads RI. Residues 154-156, R200, 213-214, and R236 contribute to the substrate site; these read SCT and TK. C155 acts as the Nucleophile in catalysis. Residue N318 coordinates NAD(+).

It belongs to the glyceraldehyde-3-phosphate dehydrogenase family. Epd subfamily. In terms of assembly, homotetramer.

The protein resides in the cytoplasm. The catalysed reaction is D-erythrose 4-phosphate + NAD(+) + H2O = 4-phospho-D-erythronate + NADH + 2 H(+). The protein operates within cofactor biosynthesis; pyridoxine 5'-phosphate biosynthesis; pyridoxine 5'-phosphate from D-erythrose 4-phosphate: step 1/5. In terms of biological role, catalyzes the NAD-dependent conversion of D-erythrose 4-phosphate to 4-phosphoerythronate. The sequence is that of D-erythrose-4-phosphate dehydrogenase from Escherichia coli O45:K1 (strain S88 / ExPEC).